Consider the following 145-residue polypeptide: MSLYHYFRPAQRSVFGDLMRDMALMERQFAPVCRISPSESSEIVNNDQKFAINLNVSQFKPEDLKINLDGRTLSIQGEQELKTDHGYSKKSFSRVILLPEDVDVGAVASNLSEDGKLSIEAPKKEAVQGRSIPIQQAIVEEKSAE.

The 106-residue stretch at 32 to 137 folds into the sHSP domain; that stretch reads VCRISPSESS…QGRSIPIQQA (106 aa).

Belongs to the small heat shock protein (HSP20) family.

The sequence is that of Heat shock protein hsp-16.2 from Caenorhabditis elegans.